The following is a 321-amino-acid chain: NADPH-dependent codeinone reductase 1-1 (321 aa).

NADPH contacts are provided by Thr27 and Asp51. Active-site proton donor residues include Tyr56 and His119. His119 is a binding site for substrate. Residues Gln187, Ser214, Leu216, Ser264, and Arg269 each contribute to the NADPH site.

It belongs to the aldo/keto reductase family. Latex secreting cells (laticifer cells). Expressed constitutively and ubiquitously with highest levels in capsules. Restricted to the parietal region of sieve elements adjacent or proximal to laticifers in roots, stems, leaves and carpels.

It localises to the cytoplasm. The protein localises to the cytosol. The catalysed reaction is codeine + NADP(+) = codeinone + NADPH + H(+). It catalyses the reaction neopine + NADP(+) = neopinone + NADPH + H(+). It carries out the reaction morphine + NADP(+) = morphinone + NADPH + H(+). The enzyme catalyses neomorphine + NADP(+) = neomorphinone + NADPH + H(+). The protein operates within alkaloid biosynthesis; morphine biosynthesis. Its function is as follows. NADPH-dependent reductase involved in biosynthesis of morphinan-type benzylisoquinoline and opiate alkaloids natural products. Reduces codeinone to codeine in the penultimate step in morphine biosynthesis. Can use morphinone, hydrocodone and hydromorphone as substrate during reductive reaction with NADPH as cofactor, and morphine and dihydrocodeine as substrate during oxidative reaction with NADP as cofactor. Converts morphinone to morphine, and neomorphinone to neomorphine. Reduces irreversibly neopinone, a spontaneous isomer of codeinone, to neopine; in planta, neopine levels are limited to low levels. The sequence is that of NADPH-dependent codeinone reductase 1-1 from Papaver somniferum (Opium poppy).